A 493-amino-acid polypeptide reads, in one-letter code: Glutamyl-tRNA(Gln) amidotransferase subunit A (493 aa).

Active-site charge relay system residues include K78 and S158. The Acyl-ester intermediate role is filled by S182.

It belongs to the amidase family. GatA subfamily. Heterotrimer of A, B and C subunits.

It catalyses the reaction L-glutamyl-tRNA(Gln) + L-glutamine + ATP + H2O = L-glutaminyl-tRNA(Gln) + L-glutamate + ADP + phosphate + H(+). In terms of biological role, allows the formation of correctly charged Gln-tRNA(Gln) through the transamidation of misacylated Glu-tRNA(Gln) in organisms which lack glutaminyl-tRNA synthetase. The reaction takes place in the presence of glutamine and ATP through an activated gamma-phospho-Glu-tRNA(Gln). The sequence is that of Glutamyl-tRNA(Gln) amidotransferase subunit A from Methylocella silvestris (strain DSM 15510 / CIP 108128 / LMG 27833 / NCIMB 13906 / BL2).